A 492-amino-acid chain; its full sequence is uncharacterized protein (492 aa).

Transmembrane regions (helical) follow at residues 16–36 (FIAF…VMTM), 39–59 (VGPF…GVVL), 107–127 (SFNG…IPVV), 133–153 (IIIG…FISL), 162–182 (AIFY…ILGI), 210–230 (IIFI…LASI), 243–263 (FLIA…IISG), 291–311 (LVGG…NSLA), 350–370 (VLIS…IPFL), 394–414 (MAAA…FMIF), 429–449 (VSYV…LFPF), and 454–474 (VFNT…VGFF).

It to M.genitalium MG225.

Its subcellular location is the cell membrane. This is an uncharacterized protein from Mycoplasma genitalium (strain ATCC 33530 / DSM 19775 / NCTC 10195 / G37) (Mycoplasmoides genitalium).